A 164-amino-acid polypeptide reads, in one-letter code: MVNPTVFFDIAVDGEPLGRVSFELFADKVPKTAENFRALSTGEKGFGYKGSCFHRIIPGFMCQGGDFTRHNGTGGKSIYGEKFDDENFILKHTGPGILSMANAGPNTNGSQFFICTAKTEWLDGKHVVFGKVKEGMNIVEAMERFGSRNGKTSKKITIADCGQI.

M1 is subject to N-acetylmethionine. V2 is modified (N-acetylvaline; in Peptidyl-prolyl cis-trans isomerase A, N-terminally processed). The region spanning 7–163 (FFDIAVDGEP…KKITIADCGQ (157 aa)) is the PPIase cyclophilin-type domain. K28 carries the post-translational modification N6-acetyllysine; alternate. K28 is covalently cross-linked (Glycyl lysine isopeptide (Lys-Gly) (interchain with G-Cter in SUMO2); alternate). A Glycyl lysine isopeptide (Lys-Gly) (interchain with G-Cter in ubiquitin); alternate cross-link involves residue K28. Residues K44 and K76 each carry the N6-acetyllysine modification. A disulfide bridge links C62 with C161. S77 carries the post-translational modification Phosphoserine. K82 is subject to N6-acetyllysine; alternate. Residue K82 forms a Glycyl lysine isopeptide (Lys-Gly) (interchain with G-Cter in SUMO2); alternate linkage. Position 93 is a phosphothreonine (T93). N108 carries N-linked (GlcNAc...) asparagine glycosylation. 3 positions are modified to N6-acetyllysine: K125, K131, and K133.

Belongs to the cyclophilin-type PPIase family. PPIase A subfamily. In terms of assembly, interacts with protein phosphatase PPP3CA/calcineurin A. Interacts with isoform 2 of BSG/CD147. Interacts with FOXO1; the interaction promotes FOXO1 dephosphorylation, nuclear accumulation and transcriptional activity. Interacts with integrin ITGA2B:ITGB3; the interaction is ROS and peptidyl-prolyl cis-trans isomerase (PPIase) activity-dependent and is increased in the presence of thrombin. Interacts with MAP3K5. Interacts with TARDBP; the interaction is dependent on the RNA-binding activity of TARDBP and the PPIase activity of PPIA/CYPA and the acetylation of PPIA/CYPA at Lys-125 favors the interaction. Interacts with HNRNPA1, HNRNPA2B1, HNRNPC, RBMX, HNRNPK and HNRNPM. In terms of processing, acetylation at Lys-125 markedly inhibits catalysis of cis to trans isomerization. PPIA acetylation also antagonizes the immunosuppressive effects of cyclosporine by inhibiting the sequential steps of cyclosporine binding and calcineurin inhibition. Acetylation at Lys-125 favors the interaction with TARDBP.

It localises to the cytoplasm. It is found in the secreted. The protein localises to the nucleus. The catalysed reaction is [protein]-peptidylproline (omega=180) = [protein]-peptidylproline (omega=0). Its activity is regulated as follows. Binds cyclosporin A (CsA). CsA mediates some of its effects via an inhibitory action on PPIase. Catalyzes the cis-trans isomerization of proline imidic peptide bonds in oligopeptides. Exerts a strong chemotactic effect on leukocytes partly through activation of one of its membrane receptors BSG/CD147, initiating a signaling cascade that culminates in MAPK/ERK activation. Activates endothelial cells (ECs) in a proinflammatory manner by stimulating activation of NF-kappa-B and ERK, JNK and p38 MAP-kinases and by inducing expression of adhesion molecules including SELE and VCAM1. Induces apoptosis in ECs by promoting the FOXO1-dependent expression of CCL2 and BCL2L11 which are involved in EC chemotaxis and apoptosis. In response to oxidative stress, initiates proapoptotic and antiapoptotic signaling in ECs via activation of NF-kappa-B and AKT1 and up-regulation of antiapoptotic protein BCL2. Negatively regulates MAP3K5/ASK1 kinase activity, autophosphorylation and oxidative stress-induced apoptosis mediated by MAP3K5/ASK1. Necessary for the assembly of TARDBP in heterogeneous nuclear ribonucleoprotein (hnRNP) complexes and regulates TARDBP binding to RNA UG repeats and TARDBP-dependent expression of HDAC6, ATG7 and VCP which are involved in clearance of protein aggregates. Plays an important role in platelet activation and aggregation. Regulates calcium mobilization and integrin ITGA2B:ITGB3 bidirectional signaling via increased ROS production as well as by facilitating the interaction between integrin and the cell cytoskeleton. Binds heparan sulfate glycosaminoglycans. This is Peptidyl-prolyl cis-trans isomerase A (PPIA) from Bos taurus (Bovine).